The following is a 150-amino-acid chain: Bis(5'-adenosyl)-triphosphatase (150 aa).

In terms of domain architecture, HIT spans 2–109; the sequence is SFRFGQHLIK…LPRKAGDFPR (108 aa). Residues His-8, Asn-27, Gln-83, and 89 to 92 contribute to the substrate site; that span reads GQTV. Residues 94–98 carry the Histidine triad motif motif; it reads HVHVH. His-96 acts as the Tele-AMP-histidine intermediate in catalysis. Residue His-98 participates in substrate binding. Tyr-114 is modified (phosphotyrosine; by SRC). Tyr-147 is subject to Phosphotyrosine.

Homodimer. Interacts with UBE2I. Interacts with MDM2. Interacts with CTNNB1. Identified in a complex with CTNNB1 and LEF1. In terms of processing, phosphorylation at Tyr-114 by SRC is required for induction of apoptosis. In terms of tissue distribution, expressed in heart, brain, lung and skeletal muscle. Particularly strong expression in liver, testis and kidney, where it is confined to the tubular epithelium.

The protein localises to the cytoplasm. The protein resides in the nucleus. It localises to the mitochondrion. The enzyme catalyses P(1),P(3)-bis(5'-adenosyl) triphosphate + H2O = AMP + ADP + 2 H(+). The catalysed reaction is adenosine 5'-phosphosulfate + H2O = sulfate + AMP + 2 H(+). It catalyses the reaction adenosine 5'-phosphosulfate + NH4(+) = adenosine 5'-phosphoramidate + sulfate + 2 H(+). It carries out the reaction adenosine 5'-phosphoramidate + H2O = AMP + NH4(+). Its function is as follows. Possesses dinucleoside triphosphate hydrolase activity. Cleaves P(1)-P(3)-bis(5'-adenosyl) triphosphate (Ap3A) to yield AMP and ADP. Can also hydrolyze P(1)-P(4)-bis(5'-adenosyl) tetraphosphate (Ap4A), but has extremely low activity with ATP. Exhibits adenylylsulfatase activity, hydrolyzing adenosine 5'-phosphosulfate to yield AMP and sulfate. Exhibits adenosine 5'-monophosphoramidase activity, hydrolyzing purine nucleotide phosphoramidates with a single phosphate group such as adenosine 5'monophosphoramidate (AMP-NH2) to yield AMP and NH2. Exhibits adenylylsulfate-ammonia adenylyltransferase, catalyzing the ammonolysis of adenosine 5'-phosphosulfate resulting in the formation of adenosine 5'-phosphoramidate. Also catalyzes the ammonolysis of adenosine 5-phosphorofluoridate and diadenosine triphosphate. Modulates transcriptional activation by CTNNB1 and thereby contributes to regulate the expression of genes essential for cell proliferation and survival, such as CCND1 and BIRC5. Plays a role in the induction of apoptosis via SRC and AKT1 signaling pathways. Inhibits MDM2-mediated proteasomal degradation of p53/TP53 and thereby plays a role in p53/TP53-mediated apoptosis. Induction of apoptosis depends on the ability of FHIT to bind P(1)-P(3)-bis(5'-adenosyl) triphosphate or related compounds, but does not require its catalytic activity. Functions as a tumor suppressor. This chain is Bis(5'-adenosyl)-triphosphatase (Fhit), found in Mus musculus (Mouse).